The primary structure comprises 479 residues: Something about silencing protein 10 (479 aa).

Residues 1–10 (MVGRSRRRGA) are compositionally biased toward basic residues. Disordered regions lie at residues 1–45 (MVGR…SYYQ) and 62–166 (KGWN…EEAQ). Residue Arg8 is modified to Omega-N-methylarginine. Over residues 11–21 (AKWAAVRAKAG) the composition is skewed to low complexity. A Phosphoserine modification is found at Ser37. A compositionally biased stretch (acidic residues) spans 69 to 111 (SGDEEDGEEEEEEVLALDMDDEDDEDGGNAGEEEEEENADDDG). Lys144 is subject to N6-acetyllysine; alternate. Residue Lys144 forms a Glycyl lysine isopeptide (Lys-Gly) (interchain with G-Cter in SUMO2); alternate linkage. Ser150 bears the Phosphoserine mark. Positions 153–165 (EAEEEEREEEEEA) are enriched in acidic residues. Residue Thr362 is modified to Phosphothreonine. A phosphoserine mark is found at Ser365 and Ser368. Arg385 is modified (citrulline). Residues 419–466 (RGLTPRRKKIDRNPRVKHREKFRRAKIRRRGQVREVRKEEQRYSGELS) form a disordered region. Over residues 422–449 (TPRRKKIDRNPRVKHREKFRRAKIRRRG) the composition is skewed to basic residues. A compositionally biased stretch (basic and acidic residues) spans 450-461 (QVREVRKEEQRY).

It belongs to the SAS10 family. As to quaternary structure, part of the small subunit (SSU) processome, composed of more than 70 proteins and the RNA chaperone small nucleolar RNA (snoRNA) U3. Citrullinated by PADI4.

Its subcellular location is the nucleus. It localises to the nucleolus. Its function is as follows. Essential for gene silencing: has a role in the structure of silenced chromatin. Plays a role in the developing brain. Part of the small subunit (SSU) processome, first precursor of the small eukaryotic ribosomal subunit. During the assembly of the SSU processome in the nucleolus, many ribosome biogenesis factors, an RNA chaperone and ribosomal proteins associate with the nascent pre-rRNA and work in concert to generate RNA folding, modifications, rearrangements and cleavage as well as targeted degradation of pre-ribosomal RNA by the RNA exosome. The protein is Something about silencing protein 10 of Homo sapiens (Human).